The following is a 703-amino-acid chain: Lethal(3)malignant brain tumor-like protein 2 (703 aa).

A disordered region spans residues Met-1–Ser-85. Ser-13 carries the post-translational modification Phosphoserine. Positions Pro-15–Asp-25 are enriched in acidic residues. Low complexity predominate over residues Ser-35–Glu-49. Acidic residues predominate over residues Glu-50–Glu-60. Ser-67 is subject to Phosphoserine. Over residues Ser-73 to Gly-82 the composition is skewed to polar residues. An FCS-type zinc finger spans residues Asp-81–Arg-116. Residues Cys-90, Cys-93, Cys-110, and Cys-114 each coordinate Zn(2+). MBT repeat units lie at residues Phe-179 to Pro-283, Thr-291 to Ser-391, Met-397 to Pro-500, and Phe-508 to Pro-604. A Phosphoserine modification is found at Ser-338. Lys-405 participates in a covalent cross-link: Glycyl lysine isopeptide (Lys-Gly) (interchain with G-Cter in SUMO2). The interval Pro-604–Leu-649 is disordered. The segment covering Thr-619 to Pro-634 has biased composition (basic residues). Glycyl lysine isopeptide (Lys-Gly) (interchain with G-Cter in SUMO2) cross-links involve residues Lys-647 and Lys-673. A disordered region spans residues Glu-675–Asn-703. Phosphoserine is present on residues Ser-681, Ser-685, and Ser-687. Lys-698 is covalently cross-linked (Glycyl lysine isopeptide (Lys-Gly) (interchain with G-Cter in SUMO1); alternate). Residue Lys-698 forms a Glycyl lysine isopeptide (Lys-Gly) (interchain with G-Cter in SUMO2); alternate linkage.

Part of the E2F6.com-1 complex in G0 phase composed of E2F6, MGA, MAX, TFDP1, CBX3, BAT8, EUHMTASE1, RING1, RNF2, MBLR, BAT8 and YAF2. In terms of processing, phosphorylated. In terms of tissue distribution, ubiquitous.

It localises to the nucleus. Its function is as follows. Putative Polycomb group (PcG) protein. PcG proteins maintain the transcriptionally repressive state of genes, probably via a modification of chromatin, rendering it heritably changed in its expressibility. Its association with a chromatin-remodeling complex suggests that it may contribute to prevent expression of genes that trigger the cell into mitosis. Binds to monomethylated and dimethylated 'Lys-20' on histone H4. Binds histone H3 peptides that are monomethylated or dimethylated on 'Lys-4', 'Lys-9' or 'Lys-27'. This chain is Lethal(3)malignant brain tumor-like protein 2 (L3mbtl2), found in Mus musculus (Mouse).